The chain runs to 409 residues: LL-diaminopimelate aminotransferase (409 aa).

Substrate contacts are provided by Y15 and G42. Pyridoxal 5'-phosphate-binding positions include Y72, 108 to 109 (SK), Y132, N187, Y218, and 246 to 248 (SFS). Residues K109, Y132, and N187 each contribute to the substrate site. K249 is modified (N6-(pyridoxal phosphate)lysine). Pyridoxal 5'-phosphate is bound by residues R257 and N292. The substrate site is built by N292 and R388.

It belongs to the class-I pyridoxal-phosphate-dependent aminotransferase family. LL-diaminopimelate aminotransferase subfamily. Homodimer. The cofactor is pyridoxal 5'-phosphate.

The catalysed reaction is (2S,6S)-2,6-diaminopimelate + 2-oxoglutarate = (S)-2,3,4,5-tetrahydrodipicolinate + L-glutamate + H2O + H(+). It participates in amino-acid biosynthesis; L-lysine biosynthesis via DAP pathway; LL-2,6-diaminopimelate from (S)-tetrahydrodipicolinate (aminotransferase route): step 1/1. Its function is as follows. Involved in the synthesis of meso-diaminopimelate (m-DAP or DL-DAP), required for both lysine and peptidoglycan biosynthesis. Catalyzes the direct conversion of tetrahydrodipicolinate to LL-diaminopimelate. The polypeptide is LL-diaminopimelate aminotransferase (Heliobacterium modesticaldum (strain ATCC 51547 / Ice1)).